The following is a 132-amino-acid chain: Agouti-signaling protein (132 aa).

The N-terminal stretch at 1-22 is a signal peptide; it reads MDVTRLLLATLLVFLCFFTAYS. N-linked (GlcNAc...) asparagine glycosylation is present at asparagine 39. Residues 60–88 are disordered; it reads KQISRKEAEKKRSSKKEASMKKVARPRTP. A compositionally biased stretch (basic and acidic residues) spans 63 to 79; that stretch reads SRKEAEKKRSSKKEASM. Intrachain disulfides connect cysteine 93–cysteine 108, cysteine 100–cysteine 114, cysteine 107–cysteine 125, cysteine 111–cysteine 132, and cysteine 116–cysteine 123. Residues 93 to 132 form the Agouti domain; that stretch reads CVATRDSCKPPAPACCDPCASCQCRFFRSACSCRVLSLNC.

The protein localises to the secreted. Functionally, involved in the regulation of melanogenesis. The binding of ASP to MC1R precludes alpha-MSH initiated signaling and thus blocks production of cAMP, leading to a down-regulation of eumelanogenesis (brown/black pigment) and thus increasing synthesis of pheomelanin (yellow/red pigment). The sequence is that of Agouti-signaling protein (ASIP) from Macaca cyclopis (Taiwan macaque).